The sequence spans 639 residues: MKIINIGVLAHVDAGKTTLTESLLYNSGAITELGSVDKGTTRTDNTLLERQRGITIQTGITSFQWENTKVNIIDTPGHMDFLAEVYRSLSVLDGAILLISAKDGVQAQTRILFHALRKMGIPTIFFINKIDQNGIDLSTVYQDIKEKLSAEIVIKQKVELYPNVCVTNFTESEQWDTVIEGNDDLLEKYMSGKSLEALELEQEESIRFQNCSLFPLYHGSAKSNIGIDNLIEVITNKFYSSTHRGPSELCGNVFKIEYTKKRQRLAYIRLYSGVLHLRDSVRVSEKEKIKVTEMYTSINGELCKIDRAYSGEIVILQNEFLKLNSVLGDTKLLPQRKKIENPHPLLQTTVEPSKPEQREMLLDALLEISDSDPLLRYYVDSTTHEIILSFLGKVQMEVISALLQEKYHVEIEITEPTVIYMERPLKNAEYTIHIEVPPNPFWASIGLSVSPLPLGSGMQYESSVSLGYLNQSFQNAVMEGIRYGCEQGLYGWNVTDCKICFKYGLYYSPVSTPADFRMLAPIVLEQVLKKAGTELLEPYLSFKIYAPQEYLSRAYNDAPKYCANIVDTQLKNNEVILSGEIPARCIQEYRSDLTFFTNGRSVCLTELKGYHVTTGEPVCQPRRPNSRIDKVRYMFNKIT.

One can recognise a tr-type G domain in the interval 1 to 242; sequence MKIINIGVLA…VITNKFYSST (242 aa). GTP contacts are provided by residues 10 to 17, 74 to 78, and 128 to 131; these read AHVDAGKT, DTPGH, and NKID.

The protein belongs to the TRAFAC class translation factor GTPase superfamily. Classic translation factor GTPase family. TetM/TetO subfamily.

Functionally, abolishes the inhibitory effect of tetracyclin on protein synthesis by a non-covalent modification of the ribosomes. This Enterococcus faecalis (Streptococcus faecalis) protein is Tetracycline resistance protein TetM from transposon Tn916 (tetM).